Consider the following 70-residue polypeptide: Large ribosomal subunit protein eL38 (70 aa).

This sequence belongs to the eukaryotic ribosomal protein eL38 family.

The chain is Large ribosomal subunit protein eL38 (RpL38) from Bombyx mori (Silk moth).